The sequence spans 146 residues: UPF0306 protein CKO_04548 (146 aa).

Belongs to the UPF0306 family.

This chain is UPF0306 protein CKO_04548, found in Citrobacter koseri (strain ATCC BAA-895 / CDC 4225-83 / SGSC4696).